We begin with the raw amino-acid sequence, 183 residues long: Oligoribonuclease (183 aa).

The Exonuclease domain occupies 9-172; the sequence is LIWIDLEMTG…DDIRDSISEL (164 aa). Residue Y130 is part of the active site.

Belongs to the oligoribonuclease family.

It is found in the cytoplasm. Functionally, 3'-to-5' exoribonuclease specific for small oligoribonucleotides. This Acinetobacter baylyi (strain ATCC 33305 / BD413 / ADP1) protein is Oligoribonuclease.